Reading from the N-terminus, the 187-residue chain is Elongation factor P (187 aa).

Belongs to the elongation factor P family.

The protein resides in the cytoplasm. Its pathway is protein biosynthesis; polypeptide chain elongation. Its function is as follows. Involved in peptide bond synthesis. Stimulates efficient translation and peptide-bond synthesis on native or reconstituted 70S ribosomes in vitro. Probably functions indirectly by altering the affinity of the ribosome for aminoacyl-tRNA, thus increasing their reactivity as acceptors for peptidyl transferase. The sequence is that of Elongation factor P from Magnetococcus marinus (strain ATCC BAA-1437 / JCM 17883 / MC-1).